The following is a 468-amino-acid chain: UDP-N-acetylmuramate--L-alanine ligase (468 aa).

Residue 117–123 (GTHGKTT) participates in ATP binding.

It belongs to the MurCDEF family.

The protein localises to the cytoplasm. It carries out the reaction UDP-N-acetyl-alpha-D-muramate + L-alanine + ATP = UDP-N-acetyl-alpha-D-muramoyl-L-alanine + ADP + phosphate + H(+). It participates in cell wall biogenesis; peptidoglycan biosynthesis. Its function is as follows. Cell wall formation. This Maricaulis maris (strain MCS10) (Caulobacter maris) protein is UDP-N-acetylmuramate--L-alanine ligase.